The sequence spans 573 residues: Proline--tRNA ligase (573 aa).

This sequence belongs to the class-II aminoacyl-tRNA synthetase family. ProS type 1 subfamily. As to quaternary structure, homodimer.

It localises to the cytoplasm. It catalyses the reaction tRNA(Pro) + L-proline + ATP = L-prolyl-tRNA(Pro) + AMP + diphosphate. Its function is as follows. Catalyzes the attachment of proline to tRNA(Pro) in a two-step reaction: proline is first activated by ATP to form Pro-AMP and then transferred to the acceptor end of tRNA(Pro). As ProRS can inadvertently accommodate and process non-cognate amino acids such as alanine and cysteine, to avoid such errors it has two additional distinct editing activities against alanine. One activity is designated as 'pretransfer' editing and involves the tRNA(Pro)-independent hydrolysis of activated Ala-AMP. The other activity is designated 'posttransfer' editing and involves deacylation of mischarged Ala-tRNA(Pro). The misacylated Cys-tRNA(Pro) is not edited by ProRS. The chain is Proline--tRNA ligase from Cupriavidus taiwanensis (strain DSM 17343 / BCRC 17206 / CCUG 44338 / CIP 107171 / LMG 19424 / R1) (Ralstonia taiwanensis (strain LMG 19424)).